Consider the following 149-residue polypeptide: Hut operon positive regulatory protein (149 aa).

It belongs to the HutP family. Homohexamer.

Its function is as follows. Antiterminator that binds to cis-acting regulatory sequences on the mRNA in the presence of histidine, thereby suppressing transcription termination and activating the hut operon for histidine utilization. This Geobacillus sp. (strain WCH70) protein is Hut operon positive regulatory protein.